The primary structure comprises 620 residues: EF-hand calcium-binding domain-containing protein 7 (620 aa).

Residues 1–24 (MANHSSLPSQKYAASERQEYQKPQ) are disordered. 2 EF-hand domains span residues 98-133 (ATKN…KGEK) and 134-169 (MSQE…TCEQ). Residues 176–234 (ERMDSNSKAKRQQFGSYIEKSPERSSSPKSSHGNLKLFDSETSTRKENKSSRPSSARSY) are disordered. The span at 213-225 (FDSETSTRKENKS) shows a compositional bias: basic and acidic residues. An EF-hand 3 domain is found at 394-429 (EFKSALSDMFDIIDLDGNGLLSLAEYNFFEMRTSGE). Residues D407, D409, N411, and E418 each coordinate Ca(2+).

The protein resides in the cell projection. The protein localises to the cilium membrane. Plays a role in the ciliary Hedgehog (Hh) signaling. The polypeptide is EF-hand calcium-binding domain-containing protein 7 (efcab7) (Xenopus laevis (African clawed frog)).